The sequence spans 442 residues: Aspartate--tRNA(Asp/Asn) ligase (442 aa).

Glutamate 172 lines the L-aspartate pocket. The aspartate stretch occupies residues 194–197 (QFYK). An L-aspartate-binding site is contributed by arginine 216. ATP is bound by residues 216–218 (RAE), 224–226 (RHL), and glutamate 365. Residues glutamate 365 and threonine 368 each contribute to the Mg(2+) site. L-aspartate is bound by residues threonine 368 and arginine 372. An ATP-binding site is contributed by 413 to 416 (GLER).

The protein belongs to the class-II aminoacyl-tRNA synthetase family. Type 2 subfamily. As to quaternary structure, homodimer. Mg(2+) serves as cofactor.

It is found in the cytoplasm. The catalysed reaction is tRNA(Asx) + L-aspartate + ATP = L-aspartyl-tRNA(Asx) + AMP + diphosphate. In terms of biological role, aspartyl-tRNA synthetase with relaxed tRNA specificity since it is able to aspartylate not only its cognate tRNA(Asp) but also tRNA(Asn). Reaction proceeds in two steps: L-aspartate is first activated by ATP to form Asp-AMP and then transferred to the acceptor end of tRNA(Asp/Asn). This Aeropyrum pernix (strain ATCC 700893 / DSM 11879 / JCM 9820 / NBRC 100138 / K1) protein is Aspartate--tRNA(Asp/Asn) ligase (aspS).